Reading from the N-terminus, the 321-residue chain is uncharacterized protein (321 aa).

Residues 1–5 are Cytoplasmic-facing; that stretch reads MKQQA. The chain crosses the membrane as a helical span at residues 6–26; that stretch reads GIGILLALTTAICWGALPIAM. The 128-residue stretch at 17–144 folds into the EamA 1 domain; that stretch reads ICWGALPIAM…LLSGLVMFFN (128 aa). Over 27-35 the chain is Periplasmic; it reads KQVLEVMEP. Residues 36-56 form a helical membrane-spanning segment; the sequence is PTIVFYRFLMASIGLGAILAV. Topologically, residues 57–70 are cytoplasmic; sequence KKRLPPLRVFRKPR. A helical membrane pass occupies residues 71-91; it reads WLILLAVATAGLFGNFILFSS. Residues 92–99 lie on the Periplasmic side of the membrane; the sequence is SLQYLSPT. The helical transmembrane segment at 100–120 threads the bilayer; the sequence is ASQVIGQLSPVGMMVASVFIL. Residues 121-130 are Cytoplasmic-facing; that stretch reads KEKMRSTQVV. The chain crosses the membrane as a helical span at residues 131–151; sequence GALMLLSGLVMFFNTSLVEIF. The Periplasmic portion of the chain corresponds to 152–156; sequence TKLTD. Residues 157–177 traverse the membrane as a helical segment; that stretch reads YTWGVIFGVGAATVWVSYGVA. The EamA 2 domain occupies 169 to 292; that stretch reads TVWVSYGVAQ…GYLGAFVVVA (124 aa). At 178–190 the chain is on the cytoplasmic side; that stretch reads QKVLLRRLASPQI. The helical transmembrane segment at 191–211 threads the bilayer; sequence LFLLYTLCTIALFPLAKPGVI. Residues 212-216 lie on the Periplasmic side of the membrane; it reads AQLSH. A helical transmembrane segment spans residues 217-237; sequence WQLACLIFCGLNTLVGYGALA. Over 238-249 the chain is Cytoplasmic; it reads EAMARWQAAQVS. Residues 250-270 form a helical membrane-spanning segment; that stretch reads AIITLTPLFTLFFSDLLSLAW. Topologically, residues 271 to 278 are periplasmic; sequence PDFFARPM. Residues 279–299 traverse the membrane as a helical segment; it reads LNLLGYLGAFVVVAGAMYSAI. The Cytoplasmic segment spans residues 300-321; it reads GHRIWGGLRKHTTVVSQPRAGE.

It belongs to the EamA transporter family.

It localises to the cell inner membrane. This is an uncharacterized protein from Escherichia coli O157:H7.